Reading from the N-terminus, the 262-residue chain is Alpha-tubulin N-acetyltransferase 1 (262 aa).

In terms of domain architecture, N-acetyltransferase spans 1–177 (MQVDADLRPI…TNFVVFEELF (177 aa)). 111–124 (FYVHFSCQRQGVGQ) serves as a coordination point for acetyl-CoA.

It belongs to the acetyltransferase ATAT1 family. In terms of tissue distribution, expressed solely in touch receptor neurons.

The enzyme catalyses L-lysyl-[alpha-tubulin] + acetyl-CoA = N(6)-acetyl-L-lysyl-[alpha-tubulin] + CoA + H(+). In terms of biological role, specifically acetylates 'Lys-40' in alpha-tubulin/mec-12 on the lumenal side of microtubules. Promotes microtubule destabilization and accelerates microtubule dynamics; this activity may be independent of acetylation activity. Acetylates alpha-tubulin with a slow enzymatic rate, due to a catalytic site that is not optimized for acetyl transfer. Enters the microtubule through each end and diffuses quickly throughout the lumen of microtubules. Acetylates only long/old microtubules because of its slow acetylation rate since it does not have time to act on dynamically unstable microtubules before the enzyme is released. Required for the maintenance of touch receptor neurons and possibly other type of neurons involved in locomotion. Regulates the number and localization of mitochondria in mechanosensory neurons. Plays a role in axonal transport. The polypeptide is Alpha-tubulin N-acetyltransferase 1 (Caenorhabditis elegans).